The sequence spans 101 residues: MSSTLIVQLDMRTLCQEADVTADCVIEIVEHGIVEPSGRTPEDWLFDDQAPLLTRRAAKLHQELELEWEGVALALELLQEVQQLRSENSMLRQRLGRFTQM.

Belongs to the CbpM family.

Interacts with CbpA and inhibits both the DnaJ-like co-chaperone activity and the DNA binding activity of CbpA. Together with CbpA, modulates the activity of the DnaK chaperone system. Does not inhibit the co-chaperone activity of DnaJ. This is Chaperone modulatory protein CbpM from Pseudomonas putida (strain GB-1).